We begin with the raw amino-acid sequence, 260 residues long: 4-hydroxy-tetrahydrodipicolinate reductase (260 aa).

NAD(+) is bound by residues 8–13, Glu-35, 91–93, and 115–118; these read GAAGRM, GTT, and APNM. His-148 acts as the Proton donor/acceptor in catalysis. His-149 contacts (S)-2,3,4,5-tetrahydrodipicolinate. Lys-152 acts as the Proton donor in catalysis. Residue 158-159 coordinates (S)-2,3,4,5-tetrahydrodipicolinate; that stretch reads GT.

This sequence belongs to the DapB family.

It localises to the cytoplasm. The catalysed reaction is (S)-2,3,4,5-tetrahydrodipicolinate + NAD(+) + H2O = (2S,4S)-4-hydroxy-2,3,4,5-tetrahydrodipicolinate + NADH + H(+). The enzyme catalyses (S)-2,3,4,5-tetrahydrodipicolinate + NADP(+) + H2O = (2S,4S)-4-hydroxy-2,3,4,5-tetrahydrodipicolinate + NADPH + H(+). It functions in the pathway amino-acid biosynthesis; L-lysine biosynthesis via DAP pathway; (S)-tetrahydrodipicolinate from L-aspartate: step 4/4. Catalyzes the conversion of 4-hydroxy-tetrahydrodipicolinate (HTPA) to tetrahydrodipicolinate. The sequence is that of 4-hydroxy-tetrahydrodipicolinate reductase from Rubrobacter xylanophilus (strain DSM 9941 / JCM 11954 / NBRC 16129 / PRD-1).